The primary structure comprises 314 residues: DNA-directed RNA polymerase subunit alpha (314 aa).

The tract at residues 1 to 228 (MIEIEKPKIE…EHLSIFVNLT (228 aa)) is alpha N-terminal domain (alpha-NTD). The segment at 245–314 (KEKVLEMTIE…DLGLSLRNEN (70 aa)) is alpha C-terminal domain (alpha-CTD).

Belongs to the RNA polymerase alpha chain family. As to quaternary structure, homodimer. The RNAP catalytic core consists of 2 alpha, 1 beta, 1 beta' and 1 omega subunit. When a sigma factor is associated with the core the holoenzyme is formed, which can initiate transcription.

It carries out the reaction RNA(n) + a ribonucleoside 5'-triphosphate = RNA(n+1) + diphosphate. DNA-dependent RNA polymerase catalyzes the transcription of DNA into RNA using the four ribonucleoside triphosphates as substrates. The protein is DNA-directed RNA polymerase subunit alpha of Listeria innocua serovar 6a (strain ATCC BAA-680 / CLIP 11262).